Consider the following 414-residue polypeptide: Histidine--tRNA ligase (414 aa).

Belongs to the class-II aminoacyl-tRNA synthetase family. As to quaternary structure, homodimer.

The protein localises to the cytoplasm. It catalyses the reaction tRNA(His) + L-histidine + ATP = L-histidyl-tRNA(His) + AMP + diphosphate + H(+). The chain is Histidine--tRNA ligase (hisS) from Mycoplasma genitalium (strain ATCC 33530 / DSM 19775 / NCTC 10195 / G37) (Mycoplasmoides genitalium).